We begin with the raw amino-acid sequence, 493 residues long: Guanosine-5'-triphosphate,3'-diphosphate pyrophosphatase (493 aa).

The protein belongs to the GppA/Ppx family. GppA subfamily.

It catalyses the reaction guanosine 3'-diphosphate 5'-triphosphate + H2O = guanosine 3',5'-bis(diphosphate) + phosphate + H(+). The protein operates within purine metabolism; ppGpp biosynthesis; ppGpp from GTP: step 2/2. Catalyzes the conversion of pppGpp to ppGpp. Guanosine pentaphosphate (pppGpp) is a cytoplasmic signaling molecule which together with ppGpp controls the 'stringent response', an adaptive process that allows bacteria to respond to amino acid starvation, resulting in the coordinated regulation of numerous cellular activities. This chain is Guanosine-5'-triphosphate,3'-diphosphate pyrophosphatase, found in Salmonella heidelberg (strain SL476).